The following is a 546-amino-acid chain: Immunoglobulin-like domain-containing receptor 1 (546 aa).

Residues 1–23 (MAWPKLPAPWLLLCTWLPAGCLS) form the signal peptide. The Ig-like V-type domain occupies 24 to 162 (LLVTVQHTER…TSGDPDKEVK (139 aa)). Over 24–167 (LLVTVQHTER…DKEVKLIVLH (144 aa)) the chain is Extracellular. An intrachain disulfide couples C45 to C145. The chain crosses the membrane as a helical span at residues 168–188 (WLTVIFIILGALLLLLLIGVC). Over 189–546 (WCQCCPQYCC…SSHSGRSVVI (358 aa)) the chain is Cytoplasmic. The interval 399-546 (WSGRHRSSRL…SSHSGRSVVI (148 aa)) is disordered. Positions 442-457 (RCQERPRRPSPRESTQ) are enriched in basic and acidic residues. Basic residues predominate over residues 458–467 (RHGRRRRHRS). S499 and S501 each carry phosphoserine. The segment covering 527–539 (GSVERRSEKDSSH) has biased composition (basic and acidic residues).

Belongs to the immunoglobulin superfamily. LISCH7 family. As to quaternary structure, homooligomer. Interacts with MARVELD2 and OCLN; the interaction is required to recruit MARVELD2 to tricellular contacts. Interacts (via C-terminus) with TRA2A, TRA2B and SRSF1. Interacts with PLSCR1. In terms of tissue distribution, mainly expressed in prostate and to a lower extent in testis, pancreas, kidney, heart and liver.

The protein localises to the cell membrane. It is found in the cell junction. It localises to the tight junction. Its subcellular location is the cytoplasm. The protein resides in the cytosol. Functionally, maintains epithelial barrier function by recruiting MARVELD2/tricellulin to tricellular tight junctions (tTJs). Crucial for normal hearing by maintaining the structural and functional integrity of tTJs, which are critical for the survival of auditory neurosensory HCs. Mediates fatty acids and lipoproteins-stimulated CCK/cholecystokinin secretion in the small intestine. In the inner ear, may regulate alternative pre-mRNA splicing via binding to TRA2A, TRA2B and SRSF1. (Microbial infection) Promotes influenza virus infection by inhibiting viral nucleoprotein NP binding to PLSCR1 and thereby PLSCR1-mediated antiviral activity. The polypeptide is Immunoglobulin-like domain-containing receptor 1 (Homo sapiens (Human)).